The sequence spans 328 residues: UDP-N-acetylglucosamine transporter YEA4 (328 aa).

10 helical membrane passes run 1–21 (MSFV…VISF), 30–50 (INLG…IQLP), 66–86 (HIPL…SVAN), 98–118 (IHII…WAVC), 122–142 (YSKL…VASL), 166–186 (SMFG…LSLL), 198–218 (WKET…LGYT), 241–261 (LPIA…FICI), 274–294 (LTLS…SVYI), and 298–318 (VLSV…GLYS).

It belongs to the nucleotide-sugar transporter family. SLC35A subfamily.

It is found in the golgi apparatus membrane. Functionally, sugar transporter that specifically mediates the transport of UDP-N-acetylglucosamine (UDP-GlcNAc) from the cytosol into Golgi vesicles where glycosyltransferases function. In Kluyveromyces lactis (strain ATCC 8585 / CBS 2359 / DSM 70799 / NBRC 1267 / NRRL Y-1140 / WM37) (Yeast), this protein is UDP-N-acetylglucosamine transporter YEA4 (YEA4).